Here is a 152-residue protein sequence, read N- to C-terminus: Acidic phospholipase A2 homolog taipoxin gamma chain (152 aa).

Positions 1-19 are cleaved as a signal peptide; sequence MHPAHLLVLLAVCVSLLGS. 8 disulfide bridges follow: cysteine 38-cysteine 104, cysteine 42-cysteine 46, cysteine 54-cysteine 151, cysteine 56-cysteine 72, cysteine 71-cysteine 132, cysteine 78-cysteine 125, cysteine 88-cysteine 118, and cysteine 111-cysteine 123. Asparagine 97 carries N-linked (GlcNAc...) asparagine glycosylation.

The protein belongs to the phospholipase A2 family. Group I subfamily. D49 sub-subfamily. In terms of assembly, heterotrimer of alpha, beta, and gamma chains; non-covalently linked. Post-translationally, contains 0.9% fucose, 2.2% mannose, 4.2% N-acetyl-D-glucosamine, 3.5% galactose, and 3.8% N-acetyl-neuraminic acid (sialic acid). Expressed by the venom gland.

It localises to the secreted. In terms of biological role, heterotrimer: Snake venom phospholipase A2 (PLA2) heterotrimer that acts as a potent presynaptic neurotoxin by blocking synaptic transmission and synaptic vesicle recycling. May act by binding in a calcium-dependent fashion to neurotonal pentraxin-1 (NPTX1) and neurotonal pentraxin-2 (NPTX2), but not to neuronal pentraxin receptor (NPTXR). Also binds to taipoxin-associated calcium binding protein 49 (RCN2), a protein localized in the lumen of endoplasmic reticulum. Its function is as follows. Monomer (gamma chain): Snake venom phospholipase A2 homolog that is neither toxic nor enzymatically active. Does not bind calcium. In Oxyuranus scutellatus scutellatus (Australian taipan), this protein is Acidic phospholipase A2 homolog taipoxin gamma chain.